We begin with the raw amino-acid sequence, 325 residues long: 4-hydroxy-3-methylbut-2-enyl diphosphate reductase (325 aa).

C13 lines the [4Fe-4S] cluster pocket. The (2E)-4-hydroxy-3-methylbut-2-enyl diphosphate site is built by H42 and H76. H42 and H76 together coordinate dimethylallyl diphosphate. Residues H42 and H76 each coordinate isopentenyl diphosphate. C98 is a binding site for [4Fe-4S] cluster. A (2E)-4-hydroxy-3-methylbut-2-enyl diphosphate-binding site is contributed by H126. H126 serves as a coordination point for dimethylallyl diphosphate. H126 contacts isopentenyl diphosphate. Residue E128 is the Proton donor of the active site. (2E)-4-hydroxy-3-methylbut-2-enyl diphosphate is bound at residue T169. [4Fe-4S] cluster is bound at residue C230. (2E)-4-hydroxy-3-methylbut-2-enyl diphosphate-binding residues include S258, S259, N260, and S306. Residues S258, S259, N260, and S306 each contribute to the dimethylallyl diphosphate site. Isopentenyl diphosphate contacts are provided by S258, S259, N260, and S306.

It belongs to the IspH family. [4Fe-4S] cluster is required as a cofactor.

It carries out the reaction isopentenyl diphosphate + 2 oxidized [2Fe-2S]-[ferredoxin] + H2O = (2E)-4-hydroxy-3-methylbut-2-enyl diphosphate + 2 reduced [2Fe-2S]-[ferredoxin] + 2 H(+). The enzyme catalyses dimethylallyl diphosphate + 2 oxidized [2Fe-2S]-[ferredoxin] + H2O = (2E)-4-hydroxy-3-methylbut-2-enyl diphosphate + 2 reduced [2Fe-2S]-[ferredoxin] + 2 H(+). Its pathway is isoprenoid biosynthesis; dimethylallyl diphosphate biosynthesis; dimethylallyl diphosphate from (2E)-4-hydroxy-3-methylbutenyl diphosphate: step 1/1. The protein operates within isoprenoid biosynthesis; isopentenyl diphosphate biosynthesis via DXP pathway; isopentenyl diphosphate from 1-deoxy-D-xylulose 5-phosphate: step 6/6. In terms of biological role, catalyzes the conversion of 1-hydroxy-2-methyl-2-(E)-butenyl 4-diphosphate (HMBPP) into a mixture of isopentenyl diphosphate (IPP) and dimethylallyl diphosphate (DMAPP). Acts in the terminal step of the DOXP/MEP pathway for isoprenoid precursor biosynthesis. The sequence is that of 4-hydroxy-3-methylbut-2-enyl diphosphate reductase from Prosthecochloris aestuarii (strain DSM 271 / SK 413).